Here is a 198-residue protein sequence, read N- to C-terminus: Probable thymidylate kinase (198 aa).

Gly9 to Thr16 contributes to the ATP binding site.

It belongs to the thymidylate kinase family.

It carries out the reaction dTMP + ATP = dTDP + ADP. The polypeptide is Probable thymidylate kinase (Methanococcus vannielii (strain ATCC 35089 / DSM 1224 / JCM 13029 / OCM 148 / SB)).